A 246-amino-acid chain; its full sequence is Proteasome subunit alpha (246 aa).

It belongs to the peptidase T1A family. The 20S proteasome core is composed of 14 alpha and 14 beta subunits that assemble into four stacked heptameric rings, resulting in a barrel-shaped structure. The two inner rings, each composed of seven catalytic beta subunits, are sandwiched by two outer rings, each composed of seven alpha subunits. The catalytic chamber with the active sites is on the inside of the barrel. Has a gated structure, the ends of the cylinder being occluded by the N-termini of the alpha-subunits. Is capped at one or both ends by the proteasome regulatory ATPase, PAN.

Its subcellular location is the cytoplasm. The formation of the proteasomal ATPase PAN-20S proteasome complex, via the docking of the C-termini of PAN into the intersubunit pockets in the alpha-rings, triggers opening of the gate for substrate entry. Interconversion between the open-gate and close-gate conformations leads to a dynamic regulation of the 20S proteasome proteolysis activity. Its function is as follows. Component of the proteasome core, a large protease complex with broad specificity involved in protein degradation. This chain is Proteasome subunit alpha, found in Methanopyrus kandleri (strain AV19 / DSM 6324 / JCM 9639 / NBRC 100938).